We begin with the raw amino-acid sequence, 237 residues long: Proteasome subunit beta (237 aa).

A disordered region spans residues 1 to 27 (MSKFPDLPGMKNLDANPYEPELASFDD). Positions 1-42 (MSKFPDLPGMKNLDANPYEPELASFDDMDADAGDGDAVAKTG) are cleaved as a propeptide — removed in mature form; by autocatalysis. Thr-43 serves as the catalytic Nucleophile.

This sequence belongs to the peptidase T1B family. The 20S proteasome core is composed of 14 alpha and 14 beta subunits that assemble into four stacked heptameric rings, resulting in a barrel-shaped structure. The two inner rings, each composed of seven catalytic beta subunits, are sandwiched by two outer rings, each composed of seven alpha subunits. The catalytic chamber with the active sites is on the inside of the barrel. Has a gated structure, the ends of the cylinder being occluded by the N-termini of the alpha-subunits. Is capped at one or both ends by the proteasome regulatory ATPase, PAN.

The protein resides in the cytoplasm. The enzyme catalyses Cleavage of peptide bonds with very broad specificity.. Its activity is regulated as follows. The formation of the proteasomal ATPase PAN-20S proteasome complex, via the docking of the C-termini of PAN into the intersubunit pockets in the alpha-rings, triggers opening of the gate for substrate entry. Interconversion between the open-gate and close-gate conformations leads to a dynamic regulation of the 20S proteasome proteolysis activity. Its function is as follows. Component of the proteasome core, a large protease complex with broad specificity involved in protein degradation. This chain is Proteasome subunit beta, found in Halomicrobium mukohataei (strain ATCC 700874 / DSM 12286 / JCM 9738 / NCIMB 13541) (Haloarcula mukohataei).